The sequence spans 89 residues: Small ribosomal subunit protein uS15 (89 aa).

This sequence belongs to the universal ribosomal protein uS15 family. In terms of assembly, part of the 30S ribosomal subunit. Forms a bridge to the 50S subunit in the 70S ribosome, contacting the 23S rRNA.

In terms of biological role, one of the primary rRNA binding proteins, it binds directly to 16S rRNA where it helps nucleate assembly of the platform of the 30S subunit by binding and bridging several RNA helices of the 16S rRNA. Forms an intersubunit bridge (bridge B4) with the 23S rRNA of the 50S subunit in the ribosome. This Hahella chejuensis (strain KCTC 2396) protein is Small ribosomal subunit protein uS15.